A 208-amino-acid polypeptide reads, in one-letter code: ATP-dependent Clp protease proteolytic subunit (208 aa).

The active-site Nucleophile is the Ser105. His130 is a catalytic residue.

It belongs to the peptidase S14 family. In terms of assembly, fourteen ClpP subunits assemble into 2 heptameric rings which stack back to back to give a disk-like structure with a central cavity, resembling the structure of eukaryotic proteasomes.

The protein localises to the cytoplasm. It carries out the reaction Hydrolysis of proteins to small peptides in the presence of ATP and magnesium. alpha-casein is the usual test substrate. In the absence of ATP, only oligopeptides shorter than five residues are hydrolyzed (such as succinyl-Leu-Tyr-|-NHMec, and Leu-Tyr-Leu-|-Tyr-Trp, in which cleavage of the -Tyr-|-Leu- and -Tyr-|-Trp bonds also occurs).. In terms of biological role, cleaves peptides in various proteins in a process that requires ATP hydrolysis. Has a chymotrypsin-like activity. Plays a major role in the degradation of misfolded proteins. The polypeptide is ATP-dependent Clp protease proteolytic subunit (Xylella fastidiosa (strain M12)).